A 175-amino-acid chain; its full sequence is Adenine phosphoribosyltransferase (175 aa).

It belongs to the purine/pyrimidine phosphoribosyltransferase family. Homodimer.

The protein resides in the cytoplasm. The catalysed reaction is AMP + diphosphate = 5-phospho-alpha-D-ribose 1-diphosphate + adenine. It functions in the pathway purine metabolism; AMP biosynthesis via salvage pathway; AMP from adenine: step 1/1. In terms of biological role, catalyzes a salvage reaction resulting in the formation of AMP, that is energically less costly than de novo synthesis. The polypeptide is Adenine phosphoribosyltransferase (Caldicellulosiruptor saccharolyticus (strain ATCC 43494 / DSM 8903 / Tp8T 6331)).